Here is a 294-residue protein sequence, read N- to C-terminus: N-acetylmuramic acid 6-phosphate etherase (294 aa).

An SIS domain is found at T56–K219. The active-site Proton donor is E84. The active site involves E115.

This sequence belongs to the GCKR-like family. MurNAc-6-P etherase subfamily. As to quaternary structure, homodimer.

The catalysed reaction is N-acetyl-D-muramate 6-phosphate + H2O = N-acetyl-D-glucosamine 6-phosphate + (R)-lactate. It functions in the pathway amino-sugar metabolism; 1,6-anhydro-N-acetylmuramate degradation. It participates in amino-sugar metabolism; N-acetylmuramate degradation. The protein operates within cell wall biogenesis; peptidoglycan recycling. Its function is as follows. Specifically catalyzes the cleavage of the D-lactyl ether substituent of MurNAc 6-phosphate, producing GlcNAc 6-phosphate and D-lactate. Together with AnmK, is also required for the utilization of anhydro-N-acetylmuramic acid (anhMurNAc) either imported from the medium or derived from its own cell wall murein, and thus plays a role in cell wall recycling. The polypeptide is N-acetylmuramic acid 6-phosphate etherase (Francisella philomiragia subsp. philomiragia (strain ATCC 25017 / CCUG 19701 / FSC 153 / O#319-036)).